Reading from the N-terminus, the 520-residue chain is Bifunctional purine biosynthesis protein PurH (520 aa).

Residues 1–146 enclose the MGS-like domain; sequence MAPVALLSVS…KNHADVAVLT (146 aa).

It belongs to the PurH family.

The catalysed reaction is (6R)-10-formyltetrahydrofolate + 5-amino-1-(5-phospho-beta-D-ribosyl)imidazole-4-carboxamide = 5-formamido-1-(5-phospho-D-ribosyl)imidazole-4-carboxamide + (6S)-5,6,7,8-tetrahydrofolate. It catalyses the reaction IMP + H2O = 5-formamido-1-(5-phospho-D-ribosyl)imidazole-4-carboxamide. The protein operates within purine metabolism; IMP biosynthesis via de novo pathway; 5-formamido-1-(5-phospho-D-ribosyl)imidazole-4-carboxamide from 5-amino-1-(5-phospho-D-ribosyl)imidazole-4-carboxamide (10-formyl THF route): step 1/1. It participates in purine metabolism; IMP biosynthesis via de novo pathway; IMP from 5-formamido-1-(5-phospho-D-ribosyl)imidazole-4-carboxamide: step 1/1. The protein is Bifunctional purine biosynthesis protein PurH of Synechococcus sp. (strain CC9902).